Consider the following 88-residue polypeptide: Putative membrane protein insertion efficiency factor (88 aa).

This sequence belongs to the UPF0161 family.

The protein localises to the cell inner membrane. Functionally, could be involved in insertion of integral membrane proteins into the membrane. The polypeptide is Putative membrane protein insertion efficiency factor (Prochlorococcus marinus (strain MIT 9313)).